Here is a 626-residue protein sequence, read N- to C-terminus: ATP-dependent rRNA helicase spb4 (626 aa).

The Q motif motif lies at 14 to 42 (WDALTPSLAEWVLDAISSMGFEKMTPVQA). In terms of domain architecture, Helicase ATP-binding spans 45–246 (IPLFMGNKDV…RVGLRNPVKI (202 aa)). 58–65 (AVTGSGKT) contributes to the ATP binding site. Residues 194 to 197 (DEAD) carry the DEAD box motif. In terms of domain architecture, Helicase C-terminal spans 279-437 (ALLSLLSQLE…TTGEAAKILI (159 aa)). The segment at 553 to 599 (QREAWSQKHEKQDLKELKREKKKRKREIERLEKMTDEEKKEEQAKEK) is disordered. 2 stretches are compositionally biased toward basic and acidic residues: residues 554–571 (REAW…ELKR) and 578–599 (REIE…AKEK). A coiled-coil region spans residues 558-620 (SQKHEKQDLK…RKIEDDADVE (63 aa)).

It belongs to the DEAD box helicase family. DDX55/SPB4 subfamily. In terms of assembly, component of pre-60S ribosomal complexes.

It is found in the nucleus. The protein localises to the nucleolus. It catalyses the reaction ATP + H2O = ADP + phosphate + H(+). Functionally, ATP-binding RNA helicase involved in the biogenesis of 60S ribosomal subunits. Binds 90S pre-ribosomal particles and dissociates from pre-60S ribosomal particles after processing of 27SB pre-rRNA. Required for the normal formation of 18S rRNA through the processing of pre-rRNAs at sites A0, A1 and A2, and the normal formation of 25S and 5.8S rRNAs through the processing of pre-rRNAs at sites C1 and C2. This is ATP-dependent rRNA helicase spb4 from Botryotinia fuckeliana (strain B05.10) (Noble rot fungus).